The sequence spans 331 residues: MATIACASIIEQQRLRSSNFVIAQYIDLLCIVITFVTTYPAIQLVLNKSLFQWSTKMLILESLFFANLYQIFYGIEAITILYKHHFMTSDFCNIMQTESNCAPYLKVILGTTGGMIFAQTGLMIERTCATFLASYRKRKSEIIGFSITIIVFFCSSITGKLFIWDDPLDGMVLGCFILPKNSYKRYNTYFTVCTVLPLFNLGISILLKIYNTKLEYSSRFEVSARFQKREVIDSTGTVCFLAFSLFILLFIYSVGVGALRHLLHENIISQEDFNLCVVWLYTIPFIAMLLPLLLIYRIRRTRSNRIEMLIEFTKQKQSQENHISQMKNMWS.

Transmembrane regions (helical) follow at residues 26–46 (IDLLCIVITFVTTYPAIQLVL), 58–78 (LILESLFFANLYQIFYGIEAI), 104–124 (YLKVILGTTGGMIFAQTGLMI), 142–162 (IIGFSITIIVFFCSSITGKLF), 189–209 (YFTVCTVLPLFNLGISILLKI), 238–258 (VCFLAFSLFILLFIYSVGVGA), and 275–295 (LCVVWLYTIPFIAMLLPLLLI).

Belongs to the nematode receptor-like protein sra family.

It localises to the membrane. The chain is Serpentine receptor class alpha-9 (sra-9) from Caenorhabditis elegans.